The sequence spans 79 residues: Sec-independent protein translocase protein TatA (79 aa).

Residues 1 to 21 (MHMPSGTQWLIILLIVVLLFG) form a helical membrane-spanning segment.

The protein belongs to the TatA/E family. In terms of assembly, the Tat system comprises two distinct complexes: a TatABC complex, containing multiple copies of TatA, TatB and TatC subunits, and a separate TatA complex, containing only TatA subunits. Substrates initially bind to the TatABC complex, which probably triggers association of the separate TatA complex to form the active translocon.

The protein resides in the cell inner membrane. Its function is as follows. Part of the twin-arginine translocation (Tat) system that transports large folded proteins containing a characteristic twin-arginine motif in their signal peptide across membranes. TatA could form the protein-conducting channel of the Tat system. The protein is Sec-independent protein translocase protein TatA of Campylobacter lari (strain RM2100 / D67 / ATCC BAA-1060).